A 144-amino-acid polypeptide reads, in one-letter code: Cell division protein SepF (144 aa).

The segment covering 21-38 (TDLQGTKTTDEVSPTSRP) has biased composition (polar residues). The disordered stretch occupies residues 21-40 (TDLQGTKTTDEVSPTSRPDN).

The protein belongs to the SepF family. As to quaternary structure, homodimer. Interacts with FtsZ.

The protein localises to the cytoplasm. Cell division protein that is part of the divisome complex and is recruited early to the Z-ring. Probably stimulates Z-ring formation, perhaps through the cross-linking of FtsZ protofilaments. Its function overlaps with FtsA. This chain is Cell division protein SepF, found in Latilactobacillus sakei subsp. sakei (strain 23K) (Lactobacillus sakei subsp. sakei).